Here is a 558-residue protein sequence, read N- to C-terminus: Membrane protein insertase YidC (558 aa).

The next 5 membrane-spanning stretches (helical) occupy residues 3 to 23 (IKRTVLWVIFFMSAVMLFDNW), 364 to 384 (FVGNWGWAIVLLTLLIKAVFF), 438 to 458 (LPVVIQIPVFISLYWVLLASV), 477 to 497 (PYFILPVLMAVSMFVQTKLNP), and 508 to 528 (MMFMPIAFSVMFFFFPAGLVL).

Belongs to the OXA1/ALB3/YidC family. Type 1 subfamily. In terms of assembly, interacts with the Sec translocase complex via SecD. Specifically interacts with transmembrane segments of nascent integral membrane proteins during membrane integration.

It is found in the cell inner membrane. Its function is as follows. Required for the insertion and/or proper folding and/or complex formation of integral membrane proteins into the membrane. Involved in integration of membrane proteins that insert both dependently and independently of the Sec translocase complex, as well as at least some lipoproteins. Aids folding of multispanning membrane proteins. The chain is Membrane protein insertase YidC from Burkholderia pseudomallei (strain 668).